The following is a 239-amino-acid chain: Ribitol-5-phosphate cytidylyltransferase (239 aa).

Residues 7–10 and 80–86 contribute to the CTP site; these read FAGG and GETGQMS.

This sequence belongs to the IspD/TarI cytidylyltransferase family. TarI subfamily.

The catalysed reaction is D-ribitol 5-phosphate + CTP + H(+) = CDP-L-ribitol + diphosphate. Its pathway is cell wall biogenesis; poly(ribitol phosphate) teichoic acid biosynthesis. Catalyzes the transfer of the cytidylyl group of CTP to D-ribitol 5-phosphate. This Streptococcus agalactiae serotype III (strain NEM316) protein is Ribitol-5-phosphate cytidylyltransferase.